Here is a 93-residue protein sequence, read N- to C-terminus: MGRSLKKGPFADEHLLKKVDAQKDQDKKPVIKTWSRRSTIFPSFIGCTIAVYDGRKHVPVYIQDDMVGHKLGEFVPTRTFRGHGGDDKKTSGK.

This sequence belongs to the universal ribosomal protein uS19 family.

Protein S19 forms a complex with S13 that binds strongly to the 16S ribosomal RNA. The chain is Small ribosomal subunit protein uS19 from Pediococcus pentosaceus (strain ATCC 25745 / CCUG 21536 / LMG 10740 / 183-1w).